Here is a 163-residue protein sequence, read N- to C-terminus: ATP synthase subunit b (163 aa).

The helical transmembrane segment at 10 to 29 threads the bilayer; the sequence is ALYQLLAFSVLLFFLSKFAL.

The protein belongs to the ATPase B chain family. F-type ATPases have 2 components, F(1) - the catalytic core - and F(0) - the membrane proton channel. F(1) has five subunits: alpha(3), beta(3), gamma(1), delta(1), epsilon(1). F(0) has three main subunits: a(1), b(2) and c(10-14). The alpha and beta chains form an alternating ring which encloses part of the gamma chain. F(1) is attached to F(0) by a central stalk formed by the gamma and epsilon chains, while a peripheral stalk is formed by the delta and b chains.

The protein resides in the cell membrane. F(1)F(0) ATP synthase produces ATP from ADP in the presence of a proton or sodium gradient. F-type ATPases consist of two structural domains, F(1) containing the extramembraneous catalytic core and F(0) containing the membrane proton channel, linked together by a central stalk and a peripheral stalk. During catalysis, ATP synthesis in the catalytic domain of F(1) is coupled via a rotary mechanism of the central stalk subunits to proton translocation. In terms of biological role, component of the F(0) channel, it forms part of the peripheral stalk, linking F(1) to F(0). The protein is ATP synthase subunit b of Alkalihalophilus pseudofirmus (strain ATCC BAA-2126 / JCM 17055 / OF4) (Bacillus pseudofirmus).